A 95-amino-acid polypeptide reads, in one-letter code: Aspartyl/glutamyl-tRNA(Asn/Gln) amidotransferase subunit C (95 aa).

The protein belongs to the GatC family. In terms of assembly, heterotrimer of A, B and C subunits.

It carries out the reaction L-glutamyl-tRNA(Gln) + L-glutamine + ATP + H2O = L-glutaminyl-tRNA(Gln) + L-glutamate + ADP + phosphate + H(+). The enzyme catalyses L-aspartyl-tRNA(Asn) + L-glutamine + ATP + H2O = L-asparaginyl-tRNA(Asn) + L-glutamate + ADP + phosphate + 2 H(+). In terms of biological role, allows the formation of correctly charged Asn-tRNA(Asn) or Gln-tRNA(Gln) through the transamidation of misacylated Asp-tRNA(Asn) or Glu-tRNA(Gln) in organisms which lack either or both of asparaginyl-tRNA or glutaminyl-tRNA synthetases. The reaction takes place in the presence of glutamine and ATP through an activated phospho-Asp-tRNA(Asn) or phospho-Glu-tRNA(Gln). This chain is Aspartyl/glutamyl-tRNA(Asn/Gln) amidotransferase subunit C, found in Hydrogenovibrio crunogenus (strain DSM 25203 / XCL-2) (Thiomicrospira crunogena).